Reading from the N-terminus, the 1755-residue chain is Gag-Pro-Pol polyprotein (1755 aa).

Gly-2 carries N-myristoyl glycine; by host lipidation. Basic and acidic residues-rich tracts occupy residues 151–169 (YDEPYEEKEKADKNEEKDH) and 178–191 (QRKENSEGKRKEKD). A disordered region spans residues 151 to 191 (YDEPYEEKEKADKNEEKDHVRKIKKVVQRKENSEGKRKEKD). The short motif at 305 to 308 (PSAP) is the PTAP/PSAP motif element. 2 consecutive CCHC-type zinc fingers follow at residues 525-542 (PVCFSCGKTGHIRKDCKD) and 552-569 (GLCPRCKKGYHWKSECKS). The disordered stretch occupies residues 572-631 (DKDGNPLPPLETNAENSKNLVKGQSPSPAQKGDGVKGSGLNPEAPPFTIHDLPRGTPGSA). A compositionally biased stretch (polar residues) spans 584–599 (NAENSKNLVKGQSPSP). In terms of domain architecture, Peptidase A2 spans 766–841 (FLGLLDTGAD…LPFTLWGRDI (76 aa)). Asp-771 acts as the Protease; shared with dimeric partner in catalysis. The 189-residue stretch at 905–1093 (LQLGHLEESN…DNLKYLGTHI (189 aa)) folds into the Reverse transcriptase domain. 7 residues coordinate Mg(2+): Asp-970, Asp-1045, Asp-1046, Asp-1316, Glu-1346, Asp-1366, and Asp-1429. Residues 1307 to 1437 (LEKGIVIFTD…ADSLTRILTA (131 aa)) enclose the RNase H type-1 domain. The segment at 1436–1477 (TALESAQESHALHHQNAAALRFQFHITREQAREIVKLCPNCP) adopts an Integrase-type zinc-finger fold. Residues His-1445, His-1449, Cys-1473, and Cys-1476 each coordinate Zn(2+). Residues 1490–1647 (RGLKPRVLWQ…TAAERHWGPI (158 aa)) enclose the Integrase catalytic domain. Mg(2+) is bound by residues Asp-1501, Asp-1558, and Glu-1594. The segment at residues 1653–1702 (PMVMWKDLLTGSWKGPDVLITAGRGYACVFPQDAETPIWVPDRFIRPFTE) is a DNA-binding region (integrase-type). The tract at residues 1699–1755 (PFTERKEATPTPGTAEKTPPRDEKDQQESPKNESSPHQREDGLATSAGVDLRSGGGP) is disordered. Positions 1716–1740 (TPPRDEKDQQESPKNESSPHQREDG) are enriched in basic and acidic residues.

Belongs to the retroviral Pol polyprotein family. In terms of assembly, homodimer; when myristoylated. As to quaternary structure, homodimer. Homooctamer. In terms of assembly, homotrimer. Mg(2+) serves as cofactor. In terms of processing, specific enzymatic cleavages in vivo yield mature proteins. Released by autocatalytic processing. Post-translationally, myristoylated. Myristoylation of the matrix (MA) domain mediates the transport and binding of Gag polyproteins to the host plasma membrane and is required for the assembly of viral particles.

Its subcellular location is the virion. The catalysed reaction is DNA(n) + a 2'-deoxyribonucleoside 5'-triphosphate = DNA(n+1) + diphosphate. It catalyses the reaction Endonucleolytic cleavage to 5'-phosphomonoester.. The enzyme catalyses dUTP + H2O = dUMP + diphosphate + H(+). With respect to regulation, inhibited by pepstatin A. Its function is as follows. Matrix protein. Nucleocapsid protein p14: Binds strongly to viral nucleic acids and promote their aggregation. Also destabilizes the nucleic acids duplexes via highly structured zinc-binding motifs. Functionally, capsid protein. In terms of biological role, NC-dUTPase has dUTPase activity, thereby preventing incorporation of uracil into DNA. Its function is as follows. The aspartyl protease mediates proteolytic cleavages of Gag and Gag-Pol polyproteins during or shortly after the release of the virion from the plasma membrane. Cleavages take place as an ordered, step-wise cascade to yield mature proteins. This process is called maturation. Displays maximal activity during the budding process just prior to particle release from the cell. RT is a multifunctional enzyme that converts the viral dimeric RNA genome into dsDNA in the cytoplasm, shortly after virus entry into the cell. This enzyme displays a DNA polymerase activity that can copy either DNA or RNA templates, and a ribonuclease H (RNase H) activity that cleaves the RNA strand of RNA-DNA heteroduplexes in a partially processive 3' to 5' endonucleasic mode. Conversion of viral genomic RNA into dsDNA requires many steps. A tRNA binds to the primer-binding site (PBS) situated at the 5' end of the viral RNA. RT uses the 3' end of the tRNA primer to perfom a short round of RNA-dependent minus-strand DNA synthesis. The reading proceeds through the U5 region and ends after the repeated (R) region which is present at both ends of viral RNA. The portion of the RNA-DNA heteroduplex is digested by the RNase H, resulting in a ssDNA product attached to the tRNA primer. This ssDNA/tRNA hybridizes with the identical R region situated at the 3' end of viral RNA. This template exchange, known as minus-strand DNA strong stop transfer, can be either intra- or intermolecular. RT uses the 3' end of this newly synthesized short ssDNA to perfom the RNA-dependent minus-strand DNA synthesis of the whole template. RNase H digests the RNA template except for a polypurine tract (PPT) situated at the 5' end of the genome. It is not clear if both polymerase and RNase H activities are simultaneous. RNase H probably can proceed both in a polymerase-dependent (RNA cut into small fragments by the same RT performing DNA synthesis) and a polymerase-independent mode (cleavage of remaining RNA fragments by free RTs). Secondly, RT performs DNA-directed plus-strand DNA synthesis using the PPT that has not been removed by RNase H as primers. PPT and tRNA primers are then removed by RNase H. The 3' and 5' ssDNA PBS regions hybridize to form a circular dsDNA intermediate. Strand displacement synthesis by RT to the PBS and PPT ends produces a blunt ended, linear dsDNA copy of the viral genome that includes long terminal repeats (LTRs) at both ends. Functionally, catalyzes viral DNA integration into the host chromosome, by performing a series of DNA cutting and joining reactions. This is Gag-Pro-Pol polyprotein (gag-pro-pol) from Mus musculus (Mouse).